Consider the following 271-residue polypeptide: (+)-cis,trans-nepetalactol synthase NEPS1 (271 aa).

Residues 24–30 (GGASGIG), 49–51 (DIQ), 72–73 (DV), and N99 contribute to the NAD(+) site. T154 and Y167 together coordinate substrate. NAD(+) contacts are provided by residues Y167, K171, and 200 to 205 (VLTPLA). Y167 functions as the Proton acceptor in the catalytic mechanism.

Belongs to the short-chain dehydrogenases/reductases (SDR) family.

The enzyme catalyses (S)-8-oxocitronellyl enol = cis-trans-nepetalactol. The catalysed reaction is cis-cis-nepetalactol + NAD(+) = cis-cis-nepetalactone + NADH + H(+). It catalyses the reaction cis-trans-nepetalactol + NAD(+) = cis-trans-nepetalactone + NADH + H(+). In terms of biological role, bifunctional enzyme that possesses cyclase and dehydrogenase activities. Functions as a non-oxidoreductive cyclase to promote the formation of cis-trans-nepetalactol. Functions as dehydrogenase to oxidize cis-cis-nepetalactol and cis-trans-nepetalactol into nepetalactones, metabolites that are both insect-repellent and have euphoric effect in cats. Binds NAD(+) as classical short-chain dehydrogenase/reductase (SDR), but does not utilize it for its redox-neutral cyclase activity. This is (+)-cis,trans-nepetalactol synthase NEPS1 from Nepeta racemosa (Catmint).